A 153-amino-acid polypeptide reads, in one-letter code: Endoribonuclease YbeY (153 aa).

Zn(2+) contacts are provided by H114, H118, and H124.

The protein belongs to the endoribonuclease YbeY family. Zn(2+) is required as a cofactor.

The protein localises to the cytoplasm. Single strand-specific metallo-endoribonuclease involved in late-stage 70S ribosome quality control and in maturation of the 3' terminus of the 16S rRNA. This chain is Endoribonuclease YbeY, found in Shewanella oneidensis (strain ATCC 700550 / JCM 31522 / CIP 106686 / LMG 19005 / NCIMB 14063 / MR-1).